Here is a 228-residue protein sequence, read N- to C-terminus: Ribosomal RNA small subunit methyltransferase G (228 aa).

Residues Gly-89, Leu-94, 140–141 (VE), and Arg-159 contribute to the S-adenosyl-L-methionine site.

Belongs to the methyltransferase superfamily. RNA methyltransferase RsmG family.

The protein resides in the cytoplasm. The enzyme catalyses guanosine(527) in 16S rRNA + S-adenosyl-L-methionine = N(7)-methylguanosine(527) in 16S rRNA + S-adenosyl-L-homocysteine. In terms of biological role, specifically methylates the N7 position of guanine in position 527 of 16S rRNA. The protein is Ribosomal RNA small subunit methyltransferase G of Burkholderia ambifaria (strain MC40-6).